A 193-amino-acid polypeptide reads, in one-letter code: dCTP deaminase (193 aa).

DCTP is bound by residues 110–115 (RSSLAR), Asp-128, 136–138 (VLE), Tyr-171, Lys-178, and Gln-182. Catalysis depends on Glu-138, which acts as the Proton donor/acceptor. The tract at residues 169–193 (RPYNRRQDAKYRDQQGAVASRIDKD) is disordered.

Belongs to the dCTP deaminase family. In terms of assembly, homotrimer.

The enzyme catalyses dCTP + H2O + H(+) = dUTP + NH4(+). It functions in the pathway pyrimidine metabolism; dUMP biosynthesis; dUMP from dCTP (dUTP route): step 1/2. Functionally, catalyzes the deamination of dCTP to dUTP. The polypeptide is dCTP deaminase (Salmonella arizonae (strain ATCC BAA-731 / CDC346-86 / RSK2980)).